Consider the following 475-residue polypeptide: Adenylyl cyclase-associated protein 1 (475 aa).

A2 carries the post-translational modification N-acetylalanine. At Y31 the chain carries Phosphotyrosine. S34 is modified (phosphoserine). At K81 the chain carries N6-acetyllysine. 2 disordered regions span residues 216 to 237 and 278 to 319; these read ELSG…PPCP and MKTH…KKEP. Residues 218 to 228 show a composition bias toward low complexity; sequence SGLPSGPSAGS. The residue at position 287 (K287) is an N6-methyllysine. A phosphoserine mark is found at S290, S295, and S301. T307 carries the post-translational modification Phosphothreonine. Phosphoserine is present on residues S308 and S310. The C-CAP/cofactor C-like domain maps to 319–453; the sequence is PAVLELEGKK…EGGDFNEFPV (135 aa). K348 is covalently cross-linked (Glycyl lysine isopeptide (Lys-Gly) (interchain with G-Cter in SUMO1)).

The protein belongs to the CAP family. As to quaternary structure, homodimer. Binds actin monomers.

Its subcellular location is the cell membrane. In terms of biological role, directly regulates filament dynamics and has been implicated in a number of complex developmental and morphological processes, including mRNA localization and the establishment of cell polarity. This is Adenylyl cyclase-associated protein 1 (CAP1) from Homo sapiens (Human).